We begin with the raw amino-acid sequence, 570 residues long: CDKN2A-interacting protein (570 aa).

Ala-2 bears the N-acetylalanine mark. The 108-residue stretch at 19-126 (VETLRCEGET…KVKKRGISSS (108 aa)) folds into the XRN2-binding (XTBD) domain. The segment at 122 to 345 (GISSSNEGVE…TSLLMPKSSS (224 aa)) is disordered. The residue at position 124 (Ser-124) is a Phosphoserine. The segment covering 147–162 (VERDHGKKSAKTDRSA) has biased composition (basic and acidic residues). The span at 167–183 (SSGSKGSSTKSESSGTS) shows a compositional bias: low complexity. Residue Lys-176 forms a Glycyl lysine isopeptide (Lys-Gly) (interchain with G-Cter in SUMO1) linkage. Residues 184–198 (ARSNSGVSHQNSSTS) show a composition bias toward polar residues. The segment covering 203–221 (SVCSQSSSNSSQVTSAGSG) has biased composition (low complexity). Residues 224 to 233 (SEPEAPDKHG) show a composition bias toward basic and acidic residues. Position 234 is a phosphoserine (Ser-234). Composition is skewed to low complexity over residues 234–248 (SASF…SLNS) and 271–301 (SSVS…PLLS). Over residues 302–317 (CKSSSETASSGLTTKA) the composition is skewed to polar residues. Residues 318 to 345 (SSEANISSSVSKNSSSSGTSLLMPKSSS) are compositionally biased toward low complexity. A Phosphoserine modification is found at Ser-378. The tract at residues 383–407 (SQLASKSSSQSSTSQLPSKSTSQSS) is disordered. The region spanning 452–527 (NHGELLNAAI…SREALKLFLK (76 aa)) is the DRBM domain.

This sequence belongs to the CARF family. Interacts with CDKN2A/p14ARF, p53/TP53 and MDM2. Interacts with CHEK2 and MAPK3. Interacts with XRN2. In terms of processing, may be ubiquitinated.

Its subcellular location is the nucleus. It is found in the nucleoplasm. In terms of biological role, regulates DNA damage response and cell proliferation in a dose-dependent manner through a number of signaling pathways involved in cell proliferation, apoptosis and senescence. The polypeptide is CDKN2A-interacting protein (Cdkn2aip) (Rattus norvegicus (Rat)).